Reading from the N-terminus, the 771-residue chain is Polymeric immunoglobulin receptor (771 aa).

An N-terminal signal peptide occupies residues 1–18 (MRLYLFTLLVTVFSGVST). Residues 19–645 (KSPIFGPQEV…DGQSRSSSSK (627 aa)) lie on the Extracellular side of the membrane. Positions 21 to 120 (PIFGPQEVSS…GLGTSNRGLS (100 aa)) constitute an Ig-like V-type 1; required for binding to polymeric IgA and IgM domain. Cys40 and Cys110 are disulfide-bonded. Asn90, Asn147, Asn170, and Asn206 each carry an N-linked (GlcNAc...) asparagine glycan. 4 Ig-like V-type domains span residues 135–237 (SDTH…DLQV), 245–351 (LYKD…ESTI), 352–457 (PNRR…LQVA), and 463–563 (PNLE…IYIA). Intrachain disulfides connect Cys152–Cys220, Cys257–Cys324, and Cys370–Cys440. Asn420 and Asn471 each carry an N-linked (GlcNAc...) asparagine glycan. A disulfide bridge links Cys484 with Cys546. A disordered region spans residues 622–641 (QAQENRASGDAGSADGQSRS). The segment covering 627–641 (RASGDAGSADGQSRS) has biased composition (low complexity). The helical transmembrane segment at 646–668 (VLFSTLVPLGLVLAVGAIAVWVA) threads the bilayer. The Cytoplasmic portion of the chain corresponds to 669 to 771 (RVRHRKNVDR…AQVHDGPQEA (103 aa)). Phosphoserine occurs at positions 680, 689, 696, and 742.

Interacts (mainly via CDR1-like domain) with dimeric IgA. Interacts (mainly via CDR2-like domain) with pentameric IgM. As to quaternary structure, either free or part of the secretory IgA (sIgA) complex that consists of two, four or five IgA monomers, and two additional non-Ig polypeptides, namely the JCHAIN and the secretory component (the proteolytic product of PIGR). Free secretory component interacts with bacterial antigens toxA of C.difficile and eae of E.coli. In terms of processing, N-glycosylated. N-glycosylation is required for anchoring IgA molecules to mucus, but is not necessary for Ig binding.

The protein resides in the cell membrane. It is found in the secreted. Its function is as follows. Mediates selective transcytosis of polymeric IgA and IgM across mucosal epithelial cells. Binds polymeric IgA and IgM at the basolateral surface of epithelial cells. The complex is then transported across the cell to be secreted at the apical surface. During this process, a cleavage occurs that separates the extracellular (known as the secretory component) from the transmembrane segment. Functionally, through its N-linked glycans ensures anchoring of secretory IgA (sIgA) molecules to mucus lining the epithelial surface to neutralize extracellular pathogens. On its own (free form) may act as a non-specific microbial scavenger to prevent pathogen interaction with epithelial cells. This is Polymeric immunoglobulin receptor (Pigr) from Mus musculus (Mouse).